We begin with the raw amino-acid sequence, 394 residues long: Xylose isomerase (394 aa).

Active-site residues include H54 and D57. Residues E181, E217, H220, D245, D255, D257, and D292 each contribute to the Mg(2+) site.

This sequence belongs to the xylose isomerase family. Homotetramer. It depends on Mg(2+) as a cofactor.

Its subcellular location is the cytoplasm. It catalyses the reaction alpha-D-xylose = alpha-D-xylulofuranose. The chain is Xylose isomerase (xylA) from Actinoplanes sp. (strain ATCC 31351 / 3876) (Ampullariella sp.).